A 131-amino-acid chain; its full sequence is Profilin-3 (131 aa).

The cysteines at positions 13 and 115 are disulfide-linked. The short motif at 81–97 (AVIRGKKGSGGITIKKT) is the Involved in PIP2 interaction element. Thr-111 is subject to Phosphothreonine.

It belongs to the profilin family. Occurs in many kinds of cells as a complex with monomeric actin in a 1:1 ratio. Phosphorylated by MAP kinases.

The protein localises to the cytoplasm. Its subcellular location is the cytoskeleton. Its function is as follows. Binds to actin and affects the structure of the cytoskeleton. At high concentrations, profilin prevents the polymerization of actin, whereas it enhances it at low concentrations. This Olea europaea (Common olive) protein is Profilin-3.